Reading from the N-terminus, the 330-residue chain is uncharacterized protein (330 aa).

Disordered stretches follow at residues 136–160 (VPPS…DESS) and 172–314 (DNEK…SQFN). Over residues 223 to 235 (PKPPAPPPPPPVP) the composition is skewed to pro residues. Residues 236 to 246 (ISMTPAAISVT) are compositionally biased toward low complexity. Composition is skewed to polar residues over residues 263 to 276 (AQST…TTDE), 284 to 294 (TRSSSQSNSTV), and 304 to 314 (PASSPTFSQFN).

This is an uncharacterized protein from Danio rerio (Zebrafish).